Reading from the N-terminus, the 333-residue chain is Transaldolase (333 aa).

Lys136 serves as the catalytic Schiff-base intermediate with substrate.

Belongs to the transaldolase family. Type 1 subfamily. Homodimer.

It is found in the cytoplasm. The enzyme catalyses D-sedoheptulose 7-phosphate + D-glyceraldehyde 3-phosphate = D-erythrose 4-phosphate + beta-D-fructose 6-phosphate. It participates in carbohydrate degradation; pentose phosphate pathway; D-glyceraldehyde 3-phosphate and beta-D-fructose 6-phosphate from D-ribose 5-phosphate and D-xylulose 5-phosphate (non-oxidative stage): step 2/3. Transaldolase is important for the balance of metabolites in the pentose-phosphate pathway. This Acidobacterium capsulatum (strain ATCC 51196 / DSM 11244 / BCRC 80197 / JCM 7670 / NBRC 15755 / NCIMB 13165 / 161) protein is Transaldolase.